Reading from the N-terminus, the 383-residue chain is Galactokinase (383 aa).

34-37 (EHTD) contacts substrate. 124 to 130 (GAGLSSS) provides a ligand contact to ATP. 2 residues coordinate Mg(2+): Ser130 and Glu162. The active-site Proton acceptor is Asp174. Tyr223 is a binding site for substrate.

The protein belongs to the GHMP kinase family. GalK subfamily.

The protein resides in the cytoplasm. It carries out the reaction alpha-D-galactose + ATP = alpha-D-galactose 1-phosphate + ADP + H(+). Its pathway is carbohydrate metabolism; galactose metabolism. Functionally, catalyzes the transfer of the gamma-phosphate of ATP to D-galactose to form alpha-D-galactose-1-phosphate (Gal-1-P). The sequence is that of Galactokinase from Yersinia pseudotuberculosis serotype IB (strain PB1/+).